A 201-amino-acid chain; its full sequence is Imidazoleglycerol-phosphate dehydratase (201 aa).

Belongs to the imidazoleglycerol-phosphate dehydratase family.

It is found in the cytoplasm. The enzyme catalyses D-erythro-1-(imidazol-4-yl)glycerol 3-phosphate = 3-(imidazol-4-yl)-2-oxopropyl phosphate + H2O. Its pathway is amino-acid biosynthesis; L-histidine biosynthesis; L-histidine from 5-phospho-alpha-D-ribose 1-diphosphate: step 6/9. This is Imidazoleglycerol-phosphate dehydratase from Prochlorococcus marinus (strain MIT 9301).